The following is a 363-amino-acid chain: tRNA (guanine(26)-N(2))-dimethyltransferase (363 aa).

The Trm1 methyltransferase domain maps to 5 to 352; it reads VLRREGGVKF…GEYGEVLMAF (348 aa). 5 residues coordinate S-adenosyl-L-methionine: Arg40, Arg67, Asp85, Asp111, and Ala112.

It belongs to the class I-like SAM-binding methyltransferase superfamily. Trm1 family.

The enzyme catalyses guanosine(26) in tRNA + 2 S-adenosyl-L-methionine = N(2)-dimethylguanosine(26) in tRNA + 2 S-adenosyl-L-homocysteine + 2 H(+). In terms of biological role, dimethylates a single guanine residue at position 26 of a number of tRNAs using S-adenosyl-L-methionine as donor of the methyl groups. This Pyrobaculum aerophilum (strain ATCC 51768 / DSM 7523 / JCM 9630 / CIP 104966 / NBRC 100827 / IM2) protein is tRNA (guanine(26)-N(2))-dimethyltransferase.